We begin with the raw amino-acid sequence, 608 residues long: DNA ligase (608 aa).

An ATP-binding site is contributed by glutamate 266. The N6-AMP-lysine intermediate role is filled by lysine 268. The ATP site is built by arginine 273, arginine 288, glutamate 318, phenylalanine 358, arginine 435, and lysine 441.

Belongs to the ATP-dependent DNA ligase family. It depends on Mg(2+) as a cofactor. Requires Mn(2+) as cofactor.

It catalyses the reaction ATP + (deoxyribonucleotide)n-3'-hydroxyl + 5'-phospho-(deoxyribonucleotide)m = (deoxyribonucleotide)n+m + AMP + diphosphate.. The enzyme catalyses ADP + (deoxyribonucleotide)n-3'-hydroxyl + 5'-phospho-(deoxyribonucleotide)m = (deoxyribonucleotide)n+m + AMP + phosphate.. The catalysed reaction is GTP + (deoxyribonucleotide)n-3'-hydroxyl + 5'-phospho-(deoxyribonucleotide)m = (deoxyribonucleotide)n+m + GMP + diphosphate.. Its function is as follows. DNA ligase that seals nicks in double-stranded DNA during DNA replication, DNA recombination and DNA repair. Can use ATP, ADP and GTP, but not CTP, TTP or NAD(+). This Hyperthermus butylicus (strain DSM 5456 / JCM 9403 / PLM1-5) protein is DNA ligase.